Reading from the N-terminus, the 924-residue chain is 104 kDa microneme/rhoptry antigen (924 aa).

The signal sequence occupies residues 1–19; that stretch reads MKFLILLFNILCLFPVLAA. The tract at residues 490-907 is disordered; that stretch reads SKKKLAPITE…KKPKKPDSAY (418 aa). 2 stretches are compositionally biased toward basic and acidic residues: residues 522 to 532 and 573 to 588; these read PGDKEGSEGHK and GPKDPKHPRDPKEPRK. Over residues 592-617 the composition is skewed to low complexity; it reads PRTASPTRRPSPKLPQLSKLPKSTSP. The span at 653 to 673 shows a compositional bias: basic and acidic residues; it reads SFKEKFYDDYSKAASRSKETK. A compositionally biased stretch (low complexity) spans 724 to 736; that stretch reads SPSTSPSEFFTPP. Basic and acidic residues-rich tracts occupy residues 737–747, 770–783, and 816–825; these read ESKRTRFHETP, KSPDEAMKRPRSPS, and DPGRMAKDAS. Residues 857–867 are compositionally biased toward acidic residues; the sequence is DDEGTEADDEE. The segment covering 868–878 has biased composition (basic and acidic residues); it reads THPPEERQKTE. The segment covering 879 to 901 has biased composition (basic residues); that stretch reads VRRRRPPKKPSKSPRPSKPKKPK. D904 is lipidated: GPI-anchor amidated aspartate. Residues 905–924 constitute a propeptide, removed in mature form; that stretch reads SAYIPSILAILVVSLIVGIL.

It is found in the cell membrane. The polypeptide is 104 kDa microneme/rhoptry antigen (Theileria parva (East coast fever infection agent)).